A 259-amino-acid chain; its full sequence is Leucine-rich repeat-containing protein 3B (259 aa).

A signal peptide spans 1-33; sequence MNLVDLWLSRSLSMCLLLQSFVLMILCFHSASM. In terms of domain architecture, LRRNT spans 34-64; that stretch reads CPKGCLCSSSGGLNVTCSNANLKEIPRDLPP. N-linked (GlcNAc...) asparagine glycosylation is present at Asn47. 3 LRR repeats span residues 65 to 86, 89 to 110, and 114 to 135; these read ETVL…IFKD, QLRV…AFKG, and TLQT…AFNN. Asn94 carries N-linked (GlcNAc...) asparagine glycosylation. The 53-residue stretch at 145 to 197 folds into the LRRCT domain; that stretch reads NPWHCDCTLQQVLRSMASNHETAHNVICKTSVLDEHAGRPFLNAANDADLCNL. A helical membrane pass occupies residues 205–225; sequence AMLVTMFGWFTMVISYVVYYV.

The protein belongs to the LRRC3 family.

Its subcellular location is the membrane. This is Leucine-rich repeat-containing protein 3B (Lrrc3b) from Mus musculus (Mouse).